Consider the following 387-residue polypeptide: Putative odorant receptor 19b (387 aa).

The Cytoplasmic segment spans residues 1–40 (MDISKVDSTRALVNHWRIFRIMGIHPPGKRTFWGRHYTAY). A helical transmembrane segment spans residues 41–61 (SMVWNVTFHICIWVSFSVNLL). At 62-71 (QSNSLETFCE) the chain is on the extracellular side. The helical transmembrane segment at 72-92 (SLCVTMPHTLYMLKLINVRRM) threads the bilayer. Over 93–127 (RGEMISSHWLLRLLDKRLGCADERQIIMAGIERAE) the chain is Cytoplasmic. The helical transmembrane segment at 128-148 (FIFRTIFRGLACTVVLGIIYI) threads the bilayer. The Extracellular segment spans residues 149–171 (SASSEPTLMYPTWIPWNWKDSTS). The chain crosses the membrane as a helical span at residues 172–192 (AYLATAMLHTTALMANATLVL). Over 193-254 (NLSSYPGTYL…LRLFKSLERS (62 aa)) the chain is Cytoplasmic. Residues 255-275 (LSMTCFLQFFSTACAQCTICY) form a helical membrane-spanning segment. At 276-285 (FLLFGNVGIM) the chain is on the extracellular side. Residues 286-306 (RFMNMLFLLVILTTETLLLCY) traverse the membrane as a helical segment. Topologically, residues 307 to 336 (TAELPCKEGESLLTAVYSCNWLSQSVNFRR) are cytoplasmic. The chain crosses the membrane as a helical span at residues 337–357 (LLLLMLARCQIPMILVSGVIV). The Extracellular segment spans residues 358–387 (PISMKTFTVMIKGAYTMLTLLNEIRKTSLE).

Belongs to the insect chemoreceptor superfamily. Heteromeric odorant receptor channel (TC 1.A.69) family. Or2a subfamily. As to quaternary structure, interacts with Orco. Complexes exist early in the endomembrane system in olfactory sensory neurons (OSNs), coupling these complexes to the conserved ciliary trafficking pathway.

The protein resides in the cell membrane. Its function is as follows. Odorant receptor which mediates acceptance or avoidance behavior, depending on its substrates. The odorant receptor repertoire encodes a large collection of odor stimuli that vary widely in identity, intensity, and duration. May form a complex with Orco to form odorant-sensing units, providing sensitive and prolonged odorant signaling and calcium permeability. The protein is Putative odorant receptor 19b of Drosophila melanogaster (Fruit fly).